A 459-amino-acid polypeptide reads, in one-letter code: tRNA modification GTPase MnmE (459 aa).

Positions 29, 91, and 130 each coordinate (6S)-5-formyl-5,6,7,8-tetrahydrofolate. A TrmE-type G domain is found at 225-381; sequence GVKVAIVGRP…LEEALEQLVT (157 aa). Asn235 is a binding site for K(+). Residues 235-240, 254-260, and 279-282 contribute to the GTP site; these read NVGKSS, TDLPGTT, and DTAG. Ser239 contacts Mg(2+). 3 residues coordinate K(+): Thr254, Leu256, and Thr259. Thr260 provides a ligand contact to Mg(2+). Residue Lys459 coordinates (6S)-5-formyl-5,6,7,8-tetrahydrofolate.

It belongs to the TRAFAC class TrmE-Era-EngA-EngB-Septin-like GTPase superfamily. TrmE GTPase family. As to quaternary structure, homodimer. Heterotetramer of two MnmE and two MnmG subunits. It depends on K(+) as a cofactor.

It localises to the cytoplasm. Its function is as follows. Exhibits a very high intrinsic GTPase hydrolysis rate. Involved in the addition of a carboxymethylaminomethyl (cmnm) group at the wobble position (U34) of certain tRNAs, forming tRNA-cmnm(5)s(2)U34. This chain is tRNA modification GTPase MnmE, found in Synechococcus sp. (strain JA-3-3Ab) (Cyanobacteria bacterium Yellowstone A-Prime).